A 374-amino-acid chain; its full sequence is CC-adding tRNA nucleotidyltransferase (374 aa).

39 to 42 (GAVR) contributes to the CTP binding site. 2 residues coordinate Mg(2+): Asp-52 and Asp-54. Residues 126-127 (RD), Asn-131, 171-180 (DASRLVRAAR), and Arg-209 contribute to the CTP site.

This sequence belongs to the tRNA nucleotidyltransferase/poly(A) polymerase family. It depends on Mg(2+) as a cofactor.

The catalysed reaction is a tRNA precursor + 2 CTP = a tRNA with a 3' CC end + 2 diphosphate. In terms of biological role, tRNA nucleotidyltransferase involved in the synthesis of the tRNA CCA terminus. Adds the two cytidine residues to tRNA. This chain is CC-adding tRNA nucleotidyltransferase, found in Deinococcus radiodurans (strain ATCC 13939 / DSM 20539 / JCM 16871 / CCUG 27074 / LMG 4051 / NBRC 15346 / NCIMB 9279 / VKM B-1422 / R1).